A 152-amino-acid polypeptide reads, in one-letter code: 3-hydroxyacyl-[acyl-carrier-protein] dehydratase FabZ (152 aa).

Histidine 58 is an active-site residue.

The protein belongs to the thioester dehydratase family. FabZ subfamily.

It localises to the cytoplasm. It carries out the reaction a (3R)-hydroxyacyl-[ACP] = a (2E)-enoyl-[ACP] + H2O. Functionally, involved in unsaturated fatty acids biosynthesis. Catalyzes the dehydration of short chain beta-hydroxyacyl-ACPs and long chain saturated and unsaturated beta-hydroxyacyl-ACPs. The protein is 3-hydroxyacyl-[acyl-carrier-protein] dehydratase FabZ of Prochlorococcus marinus (strain MIT 9301).